Here is a 267-residue protein sequence, read N- to C-terminus: Glucosamine-6-phosphate deaminase (267 aa).

The active-site Proton acceptor; for enolization step is the Asp-72. Asp-141 serves as the catalytic For ring-opening step. His-143 serves as the catalytic Proton acceptor; for ring-opening step. The active-site For ring-opening step is Glu-148.

The protein belongs to the glucosamine/galactosamine-6-phosphate isomerase family. NagB subfamily.

It carries out the reaction alpha-D-glucosamine 6-phosphate + H2O = beta-D-fructose 6-phosphate + NH4(+). It functions in the pathway amino-sugar metabolism; N-acetylneuraminate degradation; D-fructose 6-phosphate from N-acetylneuraminate: step 5/5. With respect to regulation, allosterically activated by N-acetylglucosamine 6-phosphate (GlcNAc6P). Catalyzes the reversible isomerization-deamination of glucosamine 6-phosphate (GlcN6P) to form fructose 6-phosphate (Fru6P) and ammonium ion. The chain is Glucosamine-6-phosphate deaminase from Borrelia hermsii (strain HS1 / DAH).